The primary structure comprises 130 residues: Neelaredoxin (130 aa).

Residues glutamate 15, histidine 17, histidine 45, histidine 51, cysteine 115, and histidine 118 each contribute to the Fe cation site.

Belongs to the desulfoferrodoxin family. In terms of assembly, monomer. The cofactor is Fe cation.

It catalyses the reaction 2 superoxide + 2 H(+) = H2O2 + O2. Functionally, non-heme iron protein. This is Neelaredoxin (nlr) from Megalodesulfovibrio gigas (Desulfovibrio gigas).